A 934-amino-acid chain; its full sequence is AP-2 complex subunit alpha (934 aa).

A disordered region spans residues 623-670; it reads RVPENAEIRETKSPVPNSHNNAHSNAQTNHTSSANNANASSDLLGLST. Residues 636–645 are compositionally biased toward polar residues; the sequence is PVPNSHNNAH. Residues 646-663 show a composition bias toward low complexity; it reads SNAQTNHTSSANNANASS.

Belongs to the adapter complexes large subunit family. Adaptor protein complex 2 (AP-2) is a heterotetramer composed of two large adaptins (alpha-type and beta-type subunits), a medium adaptin (mu-type subunit AP50) and a small adaptin (sigma-type subunit AP17).

It is found in the cell membrane. Its subcellular location is the membrane. It localises to the coated pit. Functionally, adaptins are components of the adapter complexes which link clathrin to receptors in coated vesicles. Clathrin-associated protein complexes are believed to interact with the cytoplasmic tails of membrane proteins, leading to their selection and concentration. Alpha adaptin is a subunit of the plasma membrane adapter. The sequence is that of AP-2 complex subunit alpha from Anopheles gambiae (African malaria mosquito).